A 1460-amino-acid polypeptide reads, in one-letter code: Venom prothrombin activator omicarin-C non-catalytic subunit (1460 aa).

The first 30 residues, M1–A30, serve as a signal peptide directing secretion. Plastocyanin-like domains are found at residues Q32–C196, A206–K330, M351–C529, and V539–A685. 2 F5/8 type A domains span residues Q32–K330 and I350–A685. The Ca(2+) site is built by K124, E139, D142, and D143. N-linked (GlcNAc...) asparagine glycosylation is present at N156. Cysteines 170 and 196 form a disulfide. 5 N-linked (GlcNAc...) asparagine glycosylation sites follow: N242, N300, N385, N406, and N471. An intrachain disulfide couples C251 to C332. An intrachain disulfide couples C503 to C529. A glycan (N-linked (GlcNAc...) asparagine) is linked at N557. Cystine bridges form between C672–C1031, C965–C991, C1147–C1298, and C1303–C1457. The segment at G693–R817 is b. Residues L740–E760 are disordered. Residues S772–R817 constitute a propeptide, activation peptide (connecting region). Plastocyanin-like domains follow at residues N823–C991 and N1000–I1143. Positions N823–I1143 constitute an F5/8 type A 3 domain. Residues K919, F934, D937, and D938 each contribute to the Ca(2+) site. An N-linked (GlcNAc...) asparagine glycan is attached at N943. N-linked (GlcNAc...) asparagine glycans are attached at residues N1000, N1180, and N1397. 2 consecutive F5/8 type C domains span residues C1147–C1298 and C1303–C1457.

This sequence belongs to the multicopper oxidase family. As to quaternary structure, heterodimer of a light and a heavy chains; non-disulfide-linked. The interaction between the two chains is calcium-dependent. Found in its active form associated with omicarin-C catalytic subunit (AC Q58L95). Post-translationally, in physiological conditions, blood coagulation factor V and factor Va are inactivated by activated protein C (APC) through proteolytic degradation of the heavy chain. However, omicarin-C non-catalytic subunit (factor V-like protein) retains its full activity even at high concentration of APC. This has two explanations: this protein has only one of the three cleavage sites present in factor V that are targeted by the APC for inactivation, and the binding with the catalytic subunit protect the cleavage site from inactivation. As to expression, expressed by the venom gland.

The protein resides in the secreted. In terms of biological role, snake prothrombin activator that attacks the hemostatic system of prey. This non-catalytic subunit is functionally similar to blood coagulation factor V. It serves as a critical cofactor for the prothrombinase activity of the catalytic subunit, which is similar to the blood coagulation factor X. The complex converts prothrombin to thrombin by sequential cleavage at two positions, Arg-320 followed by Arg-271. Cleavage at Arg-320 produces an active intermediate known as meizothrombin. Meizothrombin is the 'second' substrate for prothrombinase, and it docks in an altered manner to present the second cleavage site (271). Cleavage at Arg-271 releases active thrombin from its pro-fragment. This order of events is reversed if the protease component of prothrombinase is used on its own, suggesting that the 271 site is inherently more accessible to proteolysis. The chain is Venom prothrombin activator omicarin-C non-catalytic subunit from Oxyuranus microlepidotus (Inland taipan).